The following is a 35-amino-acid chain: UPF0387 membrane protein YohO (35 aa).

A helical transmembrane segment spans residues 6-26; that stretch reads IGVIALFLLMAIGGIGGVMLA.

The protein belongs to the UPF0387 family.

The protein localises to the cell inner membrane. This Salmonella paratyphi A (strain ATCC 9150 / SARB42) protein is UPF0387 membrane protein YohO.